The primary structure comprises 257 residues: Baramicin A1 (257 aa).

Residues 1 to 19 (MKSFGLIALAICGVICVAA) form the signal peptide. The propeptide occupies 20–21 (EP). Position 22 is a pyrrolidone carboxylic acid (Gln-22). A disordered region spans residues 95 to 122 (GPNFSAKNLGPNGAKSVGIPQRARRSPQ). N-linked (GlcNAc...) asparagine glycosylation occurs at Asn-97. Positions 118–121 (RRSP) are excised as a propeptide. Pyrrolidone carboxylic acid is present on Gln-122. The propeptide occupies 145–148 (RRSP). Gln-149 is subject to Pyrrolidone carboxylic acid. Residues 172–175 (RRSP) constitute a propeptide that is removed on maturation. Gln-176 carries the pyrrolidone carboxylic acid modification. A propeptide spanning residues 199 to 204 (RRGIND) is cleaved from the precursor. N-linked (GlcNAc...) asparagine glycosylation occurs at Asn-225.

In terms of processing, proteolytically cleaved. Hemolymph (at protein level).

It localises to the secreted. In terms of biological role, secreted immune-induced peptides induced by Toll signaling. Has a significant role in resistance to infection by the entomopathogenic fungus B.bassiana R444 and weak antifungal activity against M.rileyi PHP1705. In adult males, activity appears to be important for neuromuscular processes that mediate correct wing posture upon Toll activation. This chain is Baramicin A1, found in Drosophila melanogaster (Fruit fly).